Consider the following 730-residue polypeptide: Pheromone-processing carboxypeptidase KEX1 (730 aa).

The N-terminal stretch at 1–19 is a signal peptide; it reads MLHATVLPILLWLATLAYG. Topologically, residues 20–599 are lumenal; it reads FDRKEFLVDG…DEDEEGSNFK (580 aa). The N-linked (GlcNAc...) asparagine glycan is linked to Asn-60. Active-site residues include Ser-181, Asp-376, and His-441. The tract at residues 475-590 is disordered; that stretch reads SSKDGDIDGY…LETGGEYYQD (116 aa). Residues 486-497 are compositionally biased toward basic and acidic residues; that stretch reads EDDKSQDENKDN. 2 N-linked (GlcNAc...) asparagine glycosylation sites follow: Asn-497 and Asn-507. Residues 498-514 are compositionally biased toward acidic residues; sequence ESEDESEDENDSDDESD. The segment covering 515-526 has biased composition (basic and acidic residues); that stretch reads GKEGDKQENKPD. 2 stretches are compositionally biased toward acidic residues: residues 527-557 and 579-590; these read DSDD…DGDD and NDLETGGEYYQD. The chain crosses the membrane as a helical span at residues 600-620; it reads AFFLILSLVSAFIIVAAFYIS. The Cytoplasmic portion of the chain corresponds to 621-730; that stretch reads DYIKSRRHPI…DIELQDIERH (110 aa). The interval 684–730 is disordered; sequence EDEEQLEGVVPESTRKSKKGSKKKGKYFSVPNDDSAEDIELQDIERH. Basic residues predominate over residues 699-709; that stretch reads KSKKGSKKKGK. The segment covering 717–730 has biased composition (acidic residues); the sequence is DSAEDIELQDIERH.

Belongs to the peptidase S10 family.

It is found in the golgi apparatus. It localises to the trans-Golgi network membrane. It carries out the reaction Preferential release of a C-terminal arginine or lysine residue.. Protease with a carboxypeptidase B-like function involved in the C-terminal processing of the lysine and arginine residues from protein precursors. Promotes cell fusion and is involved in the programmed cell death. The sequence is that of Pheromone-processing carboxypeptidase KEX1 (KEX1) from Candida glabrata (strain ATCC 2001 / BCRC 20586 / JCM 3761 / NBRC 0622 / NRRL Y-65 / CBS 138) (Yeast).